The sequence spans 266 residues: Undecaprenyl-diphosphatase (266 aa).

8 helical membrane passes run 1 to 21, 39 to 59, 87 to 107, 111 to 131, 149 to 169, 183 to 203, 218 to 238, and 246 to 266; these read MDTFQVIILALIQGLTEFLPI, QGLSFDVAVNTGSLLAVVIYF, WWIILATLPAVFFGFMAKDFI, LRSAEVIAVTTIVFGLLLWWA, ALLIGFAQALALIPGTSRSGA, AAARFSFLMSVPVSLGAAILV, ALTLGTLVSFVAAYLCIHYFL, and MTPFVIYRLILGAVLCGFIFL.

Belongs to the UppP family.

It is found in the cell inner membrane. The enzyme catalyses di-trans,octa-cis-undecaprenyl diphosphate + H2O = di-trans,octa-cis-undecaprenyl phosphate + phosphate + H(+). Its function is as follows. Catalyzes the dephosphorylation of undecaprenyl diphosphate (UPP). Confers resistance to bacitracin. This chain is Undecaprenyl-diphosphatase, found in Shewanella putrefaciens (strain CN-32 / ATCC BAA-453).